Here is a 435-residue protein sequence, read N- to C-terminus: MYYQIVSFSHKNCEQSMREKLAFPNDEEKATFLEQLTGFEFVHEAFIISTCNRVEIVMATRDNFSSYHAVLGLMSQKGGLNFYELKSTAKRYDDEEAIEHIFSVVSSLDSLVIGESQITGQVKEAFRFSFQHGTAGRRLNRVLSYAVKCAAEVRNATNISQNPISIASVAVAQAHKLLGDNIQGMKGIVVGAGDMGVLAAKHLLRVGCDVVLIGRDLDKVQTVADSLGEDVKADTMENLTKYINRYRLLFSATSSPEPVITGDLIENETLPRQWFDMAIPRDIEDMELEKLQLFRIDDLRAISNDNHAMREEQAVRANEIVERYTEEFYAWLKALSIEPVIKQMRQHVSAAIEKEMQRALKKGFVPKEYESNMRKMAEQMFNRFLHDPTQNLRASSTESKNTNCIESVKKMFNIDTEHVDFKQYKNDHHTKGYSA.

Residues 50-53 (TCNR), Ser-110, 115-117 (ESQ), and Gln-121 each bind substrate. Catalysis depends on Cys-51, which acts as the Nucleophile. 191–196 (GAGDMG) contacts NADP(+).

Belongs to the glutamyl-tRNA reductase family. Homodimer.

It catalyses the reaction (S)-4-amino-5-oxopentanoate + tRNA(Glu) + NADP(+) = L-glutamyl-tRNA(Glu) + NADPH + H(+). It participates in porphyrin-containing compound metabolism; protoporphyrin-IX biosynthesis; 5-aminolevulinate from L-glutamyl-tRNA(Glu): step 1/2. Functionally, catalyzes the NADPH-dependent reduction of glutamyl-tRNA(Glu) to glutamate 1-semialdehyde (GSA). The polypeptide is Glutamyl-tRNA reductase (Sulfurovum sp. (strain NBC37-1)).